The following is a 543-amino-acid chain: Protein MGF 505-10R (543 aa).

Belongs to the asfivirus MGF 505 family.

Plays a role in virus cell tropism, and may be required for efficient virus replication in macrophages. This Ornithodoros (relapsing fever ticks) protein is Protein MGF 505-10R.